The chain runs to 115 residues: Large ribosomal subunit protein bL19 (115 aa).

This sequence belongs to the bacterial ribosomal protein bL19 family.

This protein is located at the 30S-50S ribosomal subunit interface and may play a role in the structure and function of the aminoacyl-tRNA binding site. This is Large ribosomal subunit protein bL19 from Fervidobacterium nodosum (strain ATCC 35602 / DSM 5306 / Rt17-B1).